The following is an 832-amino-acid chain: MPLSCPHFRKLLLLDEEAGPLEEELPRLADEGLNRRVAEDLNLQLPNVSIPWTHKVGNFTGLYSSTVPVFNPKWQTPSFPDIHLHQDIINKCEQFVGPLTVNEKRRLKLIIAARFYPNAPKYLPLDKGIKPYYPEHVVNHYFQTRHYLHILWKAGILYKRETTRSASFCGSPYSWEQELQHGAEPVCQQSLGILPRASVGSPVQSQLKQSRLGLQSQQRQLARSHQGRSGSIRARVHSTTRRSFRVELSGSGSNHNIASTSSSCRHQSAVRETAYSHLSTVERHSSSGHEVELYSIPPNSARSQSTGPILSCWWLQFRNSEPCSDYCLSHLVNLLEDWGPCTEHGEHHIRIPRTPARVTGGVFLVDKNPHNTTESRLVVDFSQFSRGSTRVSWPKFAVPNLQSLTNLLSSNLSWLSLDVSAAFYHLPLHPAAMPHLLVGSSGLSRYVARLSSTSRIIDHQHGTMQNLHDHCSRNLFVSLMLLYKTFGRKLHLYSHPIVLGFRKIPMGVGLSPFLLAQFTSSICSVVRRAFPHCLAFSYMDDLVLGAKSVQHLESIYTAVTNFLLSLGIHLNPNKTKRWGYSLNFMGYIIGSWGSLPQDHIVQKIKQCFRKLPVNRPIDWKVCQRIVGLLGFAAPFTQCGYPALMPLYACIQAKQAFTFSPTYKAFLRTQYLTLYPVARQRPGLCQVFADATPTGWGLAIGHQRMRGTFVAPLPIHTAELLAACFARSRSGANIIGTDNSVVLSPKYTSFPWLLGCAANWILRRTSFVYVPSALNPADDPSRGRLGLYRPLLRPWFRPTTGRTSLYAVSPSVPSHLPVRVHFASPLHVAWRPP.

The tract at residues M1–Q177 is terminal protein domain (TP). Residues E178–L335 are spacer. Residues K208 to S224 show a composition bias toward low complexity. The segment at K208–R241 is disordered. Residues E336–Q679 form a polymerase/reverse transcriptase domain (RT) region. Residues E346 to I589 form the Reverse transcriptase domain. The Mg(2+) site is built by D418, D540, and D541.

Belongs to the hepadnaviridae P protein family.

The catalysed reaction is DNA(n) + a 2'-deoxyribonucleoside 5'-triphosphate = DNA(n+1) + diphosphate. It catalyses the reaction Endonucleolytic cleavage to 5'-phosphomonoester.. Its activity is regulated as follows. Activated by host HSP70 and HSP40 in vitro to be able to bind the epsilon loop of the pgRNA. Because deletion of the RNase H region renders the protein partly chaperone-independent, the chaperones may be needed indirectly to relieve occlusion of the RNA-binding site by this domain. Inhibited by several reverse-transcriptase inhibitors: Lamivudine, Adefovir and Entecavir. Multifunctional enzyme that converts the viral RNA genome into dsDNA in viral cytoplasmic capsids. This enzyme displays a DNA polymerase activity that can copy either DNA or RNA templates, and a ribonuclease H (RNase H) activity that cleaves the RNA strand of RNA-DNA heteroduplexes in a partially processive 3'- to 5'-endonucleasic mode. Neo-synthesized pregenomic RNA (pgRNA) are encapsidated together with the P protein, and reverse-transcribed inside the nucleocapsid. Initiation of reverse-transcription occurs first by binding the epsilon loop on the pgRNA genome, and is initiated by protein priming, thereby the 5'-end of (-)DNA is covalently linked to P protein. Partial (+)DNA is synthesized from the (-)DNA template and generates the relaxed circular DNA (RC-DNA) genome. After budding and infection, the RC-DNA migrates in the nucleus, and is converted into a plasmid-like covalently closed circular DNA (cccDNA). The activity of P protein does not seem to be necessary for cccDNA generation, and is presumably released from (+)DNA by host nuclear DNA repair machinery. In Gibbon hepatitis B virus subtype ayw3q (isolate Hope) (HBVgbn), this protein is Protein P.